The following is a 1024-amino-acid chain: Isoleucine--tRNA ligase (1024 aa).

The short motif at 52 to 62 (PTANGRPHVGH) is the 'HIGH' region element. The 'KMSKS' region signature appears at 590-594 (KMSKS). Residue K593 participates in ATP binding.

This sequence belongs to the class-I aminoacyl-tRNA synthetase family. IleS type 2 subfamily. Monomer. Requires Zn(2+) as cofactor.

The protein localises to the cytoplasm. The enzyme catalyses tRNA(Ile) + L-isoleucine + ATP = L-isoleucyl-tRNA(Ile) + AMP + diphosphate. Its function is as follows. Catalyzes the attachment of isoleucine to tRNA(Ile). As IleRS can inadvertently accommodate and process structurally similar amino acids such as valine, to avoid such errors it has two additional distinct tRNA(Ile)-dependent editing activities. One activity is designated as 'pretransfer' editing and involves the hydrolysis of activated Val-AMP. The other activity is designated 'posttransfer' editing and involves deacylation of mischarged Val-tRNA(Ile). This chain is Isoleucine--tRNA ligase, found in Picrophilus torridus (strain ATCC 700027 / DSM 9790 / JCM 10055 / NBRC 100828 / KAW 2/3).